A 375-amino-acid chain; its full sequence is Probable neutral protease 2 homolog ARB_05817 (375 aa).

A signal peptide spans 1-19 (MQVIVALAALGSLAAPALG). Positions 20 to 189 (FSIPRGVPVS…RGPLTRINKR (170 aa)) are excised as a propeptide. Intrachain disulfides connect Cys197/Cys267 and Cys274/Cys292. His317 provides a ligand contact to Zn(2+). Residue Glu318 is part of the active site. Zn(2+) contacts are provided by His321 and Asp332.

It belongs to the peptidase M35 family. It depends on Zn(2+) as a cofactor.

Its subcellular location is the secreted. It catalyses the reaction Preferential cleavage of bonds with hydrophobic residues in P1'. Also 3-Asn-|-Gln-4 and 8-Gly-|-Ser-9 bonds in insulin B chain.. Functionally, probable secreted metalloprotease that shows high activities on basic nuclear substrates such as histone and protamine. May be involved in virulence. The sequence is that of Probable neutral protease 2 homolog ARB_05817 from Arthroderma benhamiae (strain ATCC MYA-4681 / CBS 112371) (Trichophyton mentagrophytes).